The primary structure comprises 140 residues: PDZ domain-containing protein 11 (140 aa).

A PDZ domain is found at 47–129 (TITLKKPPGA…ISMRVRFFPY (83 aa)).

Interacts with ATP2B1, ATP2B2, ATP2B3, ATP2B4 and ATP7A. Interacts with PLEKHA7 (via WW domains) at zonula adherens; this interaction is essential for the interaction between PLEKHA7 and the ADAM10-binding protein TSPAN33. Interacts with SLC5A6. In terms of tissue distribution, widely expressed (at protein level).

Its subcellular location is the secreted. It localises to the cytoplasm. The protein resides in the cell junction. The protein localises to the adherens junction. It is found in the cell membrane. Functionally, mediates docking of ADAM10 to zonula adherens by interacting with PLEKHA7 which is required for PLEKHA7 to interact with the ADAM10-binding protein TSPAN33. The protein is PDZ domain-containing protein 11 (PDZD11) of Homo sapiens (Human).